We begin with the raw amino-acid sequence, 912 residues long: Protein translocase subunit SecA (912 aa).

ATP-binding positions include Gln87, 105-109 (GEGKT), and Asp512. Cys896, Cys898, Cys907, and His908 together coordinate Zn(2+).

The protein belongs to the SecA family. Monomer and homodimer. Part of the essential Sec protein translocation apparatus which comprises SecA, SecYEG and auxiliary proteins SecDF-YajC and YidC. Zn(2+) serves as cofactor.

Its subcellular location is the cell inner membrane. It is found in the cytoplasm. It catalyses the reaction ATP + H2O + cellular proteinSide 1 = ADP + phosphate + cellular proteinSide 2.. In terms of biological role, part of the Sec protein translocase complex. Interacts with the SecYEG preprotein conducting channel. Has a central role in coupling the hydrolysis of ATP to the transfer of proteins into and across the cell membrane, serving both as a receptor for the preprotein-SecB complex and as an ATP-driven molecular motor driving the stepwise translocation of polypeptide chains across the membrane. The protein is Protein translocase subunit SecA of Pseudomonas fluorescens (strain Pf0-1).